Consider the following 606-residue polypeptide: Electron transfer flavoprotein-ubiquinone oxidoreductase, mitochondrial (606 aa).

59–73 is an FAD binding site; the sequence is VVIVGAGPSGLSTAI. A helical membrane pass occupies residues 448-468; sequence PSLHWGTIPGLIYGALEMYIF. Residues cysteine 551, cysteine 575, cysteine 578, and cysteine 581 each contribute to the [4Fe-4S] cluster site.

The protein belongs to the ETF-QO/FixC family. In terms of assembly, monomer. [4Fe-4S] cluster is required as a cofactor. The cofactor is FAD.

It is found in the mitochondrion inner membrane. It catalyses the reaction a ubiquinone + reduced [electron-transfer flavoprotein] = a ubiquinol + oxidized [electron-transfer flavoprotein] + H(+). Functionally, accepts electrons from ETF and reduces ubiquinone. This Dictyostelium discoideum (Social amoeba) protein is Electron transfer flavoprotein-ubiquinone oxidoreductase, mitochondrial (etfdh).